The following is a 310-amino-acid chain: Putative S-adenosyl-L-methionine-dependent methyltransferase MSMEG_1888/MSMEI_1848 (310 aa).

Residues Asp-128 and 157 to 158 (DL) contribute to the S-adenosyl-L-methionine site.

The protein belongs to the UPF0677 family.

In terms of biological role, exhibits S-adenosyl-L-methionine-dependent methyltransferase activity. The polypeptide is Putative S-adenosyl-L-methionine-dependent methyltransferase MSMEG_1888/MSMEI_1848 (Mycolicibacterium smegmatis (strain ATCC 700084 / mc(2)155) (Mycobacterium smegmatis)).